Here is a 74-residue protein sequence, read N- to C-terminus: MTTDIKQLELKISDLECQMAFQEQTIDELNDALSQQQLLITNMQVQMKFVVGKMKTMDTSSMADASEETPPPHY.

Belongs to the SlyX family.

The chain is Protein SlyX homolog from Aliivibrio salmonicida (strain LFI1238) (Vibrio salmonicida (strain LFI1238)).